Reading from the N-terminus, the 571-residue chain is MSMSSKNENKISVEQRISTDIGQAYQLQGLGSNLRSIRSKTGAGEVNYIDAAKSVNDNQLLAEIGYKQELKRQFSTLQVFGIAFSIMGLLPSIASVMGGGLGGGPATLVWGWFVAAFFILLVGITMAEHASSIPTAGGLYYWTYYYAPEGYKEIISFIIGCSNSLALAAGVCSIDYGLAEEIAAAVTLTKDGNFEVTSGKLYGIFAGAVVVMCICTCVASGAIARLQTLSIFANLFIIVLLFIALPIGTKHRMGGFNDGDFIFGKYENLSDWNNGWQFCLAGFMPAVWTIGSFDSCVHQSEEAKDAKKSVPIGIISSIAVCWILGWLIIICLMACINPDIDSVLDSKYGFALAQIIYDSLGKKWAIAFMSLIAFCQFLMGASITTAVSRQVWAFSRDNGLPLSKYIKRVDSKYSVPFFAILAACVGSLILGLLCLIDDAATDALFSLAVAGNNLAWSTPTVFRLTSGRDLFRPGPFYLGKIWSPIVAWTGVAFQLFIIILVMFPSQQHGITKSTMNYACVIGPGIWILAGIYYKVYKKKYYHGPATNLSDDDYTEAVGADVIDTIMSKQEP.

At 1–73 (MSMSSKNENK…IGYKQELKRQ (73 aa)) the chain is on the cytoplasmic side. A helical transmembrane segment spans residues 74 to 94 (FSTLQVFGIAFSIMGLLPSIA). Over 95 to 105 (SVMGGGLGGGP) the chain is Vacuolar. The chain crosses the membrane as a helical span at residues 106-126 (ATLVWGWFVAAFFILLVGITM). At 127–153 (AEHASSIPTAGGLYYWTYYYAPEGYKE) the chain is on the cytoplasmic side. Residues 154–174 (IISFIIGCSNSLALAAGVCSI) form a helical membrane-spanning segment. Residues 175 to 198 (DYGLAEEIAAAVTLTKDGNFEVTS) lie on the Vacuolar side of the membrane. A helical membrane pass occupies residues 199–219 (GKLYGIFAGAVVVMCICTCVA). The Cytoplasmic segment spans residues 220 to 228 (SGAIARLQT). A helical transmembrane segment spans residues 229–249 (LSIFANLFIIVLLFIALPIGT). The Vacuolar portion of the chain corresponds to 250–271 (KHRMGGFNDGDFIFGKYENLSD). A helical membrane pass occupies residues 272 to 292 (WNNGWQFCLAGFMPAVWTIGS). Residues 293–312 (FDSCVHQSEEAKDAKKSVPI) are Cytoplasmic-facing. Residues 313–333 (GIISSIAVCWILGWLIIICLM) form a helical membrane-spanning segment. Over 334–364 (ACINPDIDSVLDSKYGFALAQIIYDSLGKKW) the chain is Vacuolar. A helical transmembrane segment spans residues 365-385 (AIAFMSLIAFCQFLMGASITT). Over 386–416 (AVSRQVWAFSRDNGLPLSKYIKRVDSKYSVP) the chain is Cytoplasmic. The chain crosses the membrane as a helical span at residues 417–437 (FFAILAACVGSLILGLLCLID). At 438–441 (DAAT) the chain is on the vacuolar side. Residues 442–462 (DALFSLAVAGNNLAWSTPTVF) form a helical membrane-spanning segment. Topologically, residues 463–482 (RLTSGRDLFRPGPFYLGKIW) are cytoplasmic. A helical membrane pass occupies residues 483 to 503 (SPIVAWTGVAFQLFIIILVMF). At 504 to 514 (PSQQHGITKST) the chain is on the vacuolar side. Residues 515–535 (MNYACVIGPGIWILAGIYYKV) form a helical membrane-spanning segment. Residues 536–571 (YKKKYYHGPATNLSDDDYTEAVGADVIDTIMSKQEP) lie on the Cytoplasmic side of the membrane.

The protein belongs to the amino acid-polyamine-organocation (APC) superfamily. Amino acid/choline transporter (ACT) (TC 2.A.3.4) family.

The protein resides in the vacuole membrane. Required for high-affinity, high-specificity GABA transport. Also transports putrescine. This is GABA-specific permease (UGA4) from Saccharomyces cerevisiae (strain ATCC 204508 / S288c) (Baker's yeast).